A 266-amino-acid chain; its full sequence is Flavin-dependent thymidylate synthase (266 aa).

The ThyX domain maps to 11-222 (GFIRLVDYMG…PLACASFERH (212 aa)). FAD is bound by residues Ser57, 80–82 (RHR), and Glu88. Residues 77–80 (QWIR), 88–92 (EISGR), and Arg161 contribute to the dUMP site. Positions 80 to 90 (RHRTARLNEIS) match the ThyX motif motif. Residues 177-179 (DLH) and His183 each bind FAD. Arg188 is a dUMP binding site. Residue Arg188 is the Involved in ionization of N3 of dUMP, leading to its activation of the active site.

This sequence belongs to the thymidylate synthase ThyX family. Homotetramer. FAD serves as cofactor.

The enzyme catalyses dUMP + (6R)-5,10-methylene-5,6,7,8-tetrahydrofolate + NADPH + H(+) = dTMP + (6S)-5,6,7,8-tetrahydrofolate + NADP(+). Its pathway is pyrimidine metabolism; dTTP biosynthesis. Its function is as follows. Catalyzes the reductive methylation of 2'-deoxyuridine-5'-monophosphate (dUMP) to 2'-deoxythymidine-5'-monophosphate (dTMP) while utilizing 5,10-methylenetetrahydrofolate (mTHF) as the methyl donor, and NADPH and FADH(2) as the reductant. This chain is Flavin-dependent thymidylate synthase, found in Treponema denticola (strain ATCC 35405 / DSM 14222 / CIP 103919 / JCM 8153 / KCTC 15104).